Reading from the N-terminus, the 471-residue chain is Glycosyl hydrolase family 109 protein 1 (471 aa).

Positions 1–15 are cleaved as a signal peptide; that stretch reads MIKNLSTFFVGIALS. Cys16 carries N-palmitoyl cysteine lipidation. Cys16 is lipidated: S-diacylglycerol cysteine. Residues 70–71, Asp92, 141–144, 161–162, and Asn190 contribute to the NAD(+) site; these read MR, WKHH, and EV. Substrate-binding positions include Tyr219, Arg235, 247 to 250, and Tyr325; that span reads YATH. Position 247 (Tyr247) interacts with NAD(+).

Belongs to the Gfo/Idh/MocA family. Glycosyl hydrolase 109 subfamily. NAD(+) serves as cofactor.

It localises to the cell membrane. Its function is as follows. Glycosidase. This is Glycosyl hydrolase family 109 protein 1 from Phocaeicola vulgatus (strain ATCC 8482 / DSM 1447 / JCM 5826 / CCUG 4940 / NBRC 14291 / NCTC 11154) (Bacteroides vulgatus).